Consider the following 210-residue polypeptide: Thymidylate kinase (210 aa).

10-17 (GLEGAGKT) lines the ATP pocket.

It belongs to the thymidylate kinase family.

The catalysed reaction is dTMP + ATP = dTDP + ADP. Phosphorylation of dTMP to form dTDP in both de novo and salvage pathways of dTTP synthesis. This is Thymidylate kinase from Actinobacillus succinogenes (strain ATCC 55618 / DSM 22257 / CCUG 43843 / 130Z).